We begin with the raw amino-acid sequence, 248 residues long: 3-deoxy-manno-octulosonate cytidylyltransferase (248 aa).

Belongs to the KdsB family.

The protein resides in the cytoplasm. The enzyme catalyses 3-deoxy-alpha-D-manno-oct-2-ulosonate + CTP = CMP-3-deoxy-beta-D-manno-octulosonate + diphosphate. The protein operates within nucleotide-sugar biosynthesis; CMP-3-deoxy-D-manno-octulosonate biosynthesis; CMP-3-deoxy-D-manno-octulosonate from 3-deoxy-D-manno-octulosonate and CTP: step 1/1. It functions in the pathway bacterial outer membrane biogenesis; lipopolysaccharide biosynthesis. Its function is as follows. Activates KDO (a required 8-carbon sugar) for incorporation into bacterial lipopolysaccharide in Gram-negative bacteria. This chain is 3-deoxy-manno-octulosonate cytidylyltransferase, found in Photobacterium profundum (strain SS9).